Here is a 319-residue protein sequence, read N- to C-terminus: D-ribose/D-allose-binding protein (319 aa).

The first 29 residues, 1 to 29, serve as a signal peptide directing secretion; that stretch reads MKRVASRRLLAAVVLTACSSFLPLSAVHA.

This sequence belongs to the bacterial solute-binding protein 2 family.

Its subcellular location is the periplasm. Functionally, binds specifically both D-ribose and D-allose, with affinities in the lower micromolar range. The sequence is that of D-ribose/D-allose-binding protein from Pseudomonas aeruginosa (strain ATCC 15692 / DSM 22644 / CIP 104116 / JCM 14847 / LMG 12228 / 1C / PRS 101 / PAO1).